Reading from the N-terminus, the 654-residue chain is MEKRGPKRRQEAAHLSCELCRERKVKCDKLDPCTNCSSAGVICVPVRRPRLPRGAHAQRLRRISPEDPEAPIQIDIASPADAGTIADDDLKERIRRLEALVDSMRSSNHVSKQLIKNFQTNKDQEAQDTIESTLNRIDEDSLLIKGPRVHPSDGGLRILGLSGSSSPETGWASIIEDREVSMQLCQVYLLNVDPVIKILHRPSLEKWMLEGQRYLGLPEGHAAVESLGAAICYVAATSLTETQSWARFHTTKSSIVARARRACETTLEKSSPLLSPDVTTLQAFVLYLVARRSEDPSRAVWTLMAFAVRIAKALDLPRGIDDNFFGQQMRKRLWLAICLLDFQTSLSQPSEPLITVAEATSLFSPPRHINDSDFDPTTSHDIPDREGLTDTTFSLVSHHVQAAGRLLNFEPSVKDDGSRQQHVQNFEQRTLRLLLYCDPESTPYAWFTWHRIQCFVSGARLSAIRPLIHQHGGHPIPILDANEGTSILSLALNILEKVQLVHTDPRGEGFRWFVTVPWQPLAIAISECYICQDRSLVQRAWPIVEAAFQQHEATVSGSSKAISITLERLMCRVRGKLLPSLELSRPGEDLALVTEAPISTSPQKVDPLVFSLDSPLLIAGQEQLLDADQSWAAWEEVIASLHYDETGRADMFLS.

The segment at residues 17–43 (CELCRERKVKCDKLDPCTNCSSAGVIC) is a DNA-binding region (zn(2)-C6 fungal-type).

Its subcellular location is the nucleus. In terms of biological role, transcription factor that specifically regulates the neosartoricin B biosynthesis gene cluster. This Trichophyton verrucosum (strain HKI 0517) protein is C6 finger domain transcription factor nscR.